The sequence spans 149 residues: Probable flagellum biosynthesis repressor protein FlbT (149 aa).

This sequence belongs to the FlbT family.

Its function is as follows. Has a post-transcriptional repressor function in flagellum biogenesis. Associates with the 5'-UTR of fljK mRNA and promotes its degradation. In Rhizobium etli (strain ATCC 51251 / DSM 11541 / JCM 21823 / NBRC 15573 / CFN 42), this protein is Probable flagellum biosynthesis repressor protein FlbT.